The sequence spans 605 residues: MVQAPSVYVCGFVERPDAPPKDACLHLDPLTVKSQLPLKKPLPLTVEHLPDAPVGSVFGLYQSRAGLFSAASITSGDFLSLLDSIYHDCDIAQSQRLPLPREPKVEALHAWLPSLSLASLHPDIPQTTADGGKLSFFDHVSICALGRRRGTTAVYGTDLAWVLKHFSDLEPSIAAQIENDANAAKRESGCPEDHPLPLTKLIAKAIDAGFLRNRVETLRQDRGVANIPAESYLKASDAPDLQKPDKALQSPPPASTDPATMLSGNAGEGATACGGSAAAGQDLISVPRNTFMTLLQTNLDNKPPRQTPLPYAAPLPPFSHQAIATAPSYGPGAGAVSPAGGYFTSPGGYYAGPAGGDPGAFLAMDAHTYHPHPHPPPAYFGLPGLFGPPPPVPPYYGSHLRADYVPAPSRSNKRKRDPEEDEEGGGLFPGEDATLYRKDIAGLSKSVNELQHTLQALRRETLSYGHTGVGYCPQQGPCYTHSGPYGFQPHQSYEVPRYVPHPPPPPTSHQAAQAQPPPPGTQAPEAHCVAESTIPEAGAAGNSGPREDTNPQQPTTEGHHRGKKLVQASASGVAQSKEPTTPKAKSVSAHLKSIFCEELLNKRVA.

Residues histidine 48, serine 116, and histidine 139 each act as charge relay system in the active site. The tract at residues 235-274 is disordered; the sequence is ASDAPDLQKPDKALQSPPPASTDPATMLSGNAGEGATACG. The interval 281-300 is interaction with pAP; the sequence is QDLISVPRNTFMTLLQTNLD. Disordered stretches follow at residues 403 to 431 and 489 to 588; these read DYVP…FPGE and PHQS…KSVS. The Nuclear localization signal motif lies at 410–416; the sequence is RSNKRKR. A compositionally biased stretch (polar residues) spans 568–579; sequence ASASGVAQSKEP. Residues 585–605 are interaction with major capsid protein; the sequence is KSVSAHLKSIFCEELLNKRVA.

The protein belongs to the herpesviridae capsid scaffolding protein family. Homomultimer. Interacts with major capsid protein. In terms of assembly, exists in a monomer-dimer equilibrium with the dimer being the active species. Capsid scaffolding protein is cleaved by assemblin after formation of the spherical procapsid. As a result, the capsid obtains its mature, icosahedral shape. Cleavages occur at two or more sites: release (R-site) and maturation (M-site).

The protein localises to the host cytoplasm. Its subcellular location is the host nucleus. It carries out the reaction Cleaves -Ala-|-Ser- and -Ala-|-Ala- bonds in the scaffold protein.. Functionally, acts as a scaffold protein by binding major capsid protein in the cytoplasm, inducing the nuclear localization of both proteins. Multimerizes in the nucleus such as major capsid protein forms the icosahedral T=16 capsid. Autocatalytic cleavage releases the assembly protein, and subsequently abolishes interaction with major capsid protein. Cleavages products are evicted from the capsid before or during DNA packaging. In terms of biological role, protease that plays an essential role in virion assembly within the nucleus. Catalyzes the cleavage of the assembly protein after formation of the spherical procapsid. By that cleavage, the capsid matures and gains its icosahedral shape. The cleavage sites seem to include -Ala-Ser-, -Ala-Ala-, as well as Ala-Thr bonds. Assemblin and cleavages products are evicted from the capsid before or during DNA packaging. Plays a major role in capsid assembly. Acts as a scaffold protein by binding major capsid protein. Multimerizes in the nucleus such as major capsid protein forms the icosahedral T=16 capsid. Cleaved by assemblin after capsid completion. The cleavages products are evicted from the capsid before or during DNA packaging. The chain is Capsid scaffolding protein from Homo sapiens (Human).